The following is a 415-amino-acid chain: Lupus La protein homolog (415 aa).

An HTH La-type RNA-binding domain is found at 7 to 99 (NEKMTALEAK…RRSPSRPLPE (93 aa)). Serine 92 and serine 94 each carry phosphoserine. Residues 111 to 187 (RSVYIKGFPT…TNLLILFKED (77 aa)) enclose the RRM domain. Lysine 116 is modified (N6-acetyllysine). Position 120 is a phosphothreonine (threonine 120). N6-acetyllysine occurs at positions 128, 327, and 356. In terms of domain architecture, xRRM spans 226-346 (EGKMGCLLKF…GRFKGSHVFT (121 aa)). The segment at 349–415 (RRFKGKGKGN…KKRENGARDK (67 aa)) is disordered. A Phosphothreonine modification is found at threonine 377. Positions 377–415 (TRFDDDDRRRGPMKRGRDGRDREEPASKHKKRENGARDK) are enriched in basic and acidic residues.

Interacts with DDX15. May interact with RUFY1. Post-translationally, phosphorylated.

Its subcellular location is the nucleus. Functionally, binds to the 3' poly(U) terminus of nascent RNA polymerase III transcripts, protecting them from exonuclease digestion and facilitating their folding and maturation. This is Lupus La protein homolog (Ssb) from Mus musculus (Mouse).